Here is a 446-residue protein sequence, read N- to C-terminus: Probable glucan endo-1,3-beta-glucosidase eglC (446 aa).

A signal peptide spans 1-18 (MQFTHLVALALALATSEA). Residue glutamate 128 is the Proton donor of the active site. Asparagine 183 carries N-linked (GlcNAc...) asparagine glycosylation. Glutamate 239 serves as the catalytic Nucleophile. N-linked (GlcNAc...) asparagine glycosylation is found at asparagine 364 and asparagine 370. Positions 393 to 416 (SSGAGASGASGQSSSSTGSSSAPS) are disordered. Residues 401-416 (ASGQSSSSTGSSSAPS) show a composition bias toward low complexity. A lipid anchor (GPI-anchor amidated asparagine) is attached at asparagine 423. Residues 424-446 (AASGLSGSIFGAVVAVCLALAAL) constitute a propeptide, removed in mature form.

It belongs to the glycosyl hydrolase 17 family. The GPI-anchor is attached to the protein in the endoplasmic reticulum and serves to target the protein to the cell surface. There, the glucosamine-inositol phospholipid moiety is cleaved off and the GPI-modified mannoprotein is covalently attached via its lipidless GPI glycan remnant to the 1,6-beta-glucan of the outer cell wall layer.

It localises to the cell membrane. The protein localises to the secreted. Its subcellular location is the cell wall. It carries out the reaction Hydrolysis of (1-&gt;3)-beta-D-glucosidic linkages in (1-&gt;3)-beta-D-glucans.. Functionally, glucanases play a role in cell expansion during growth, in cell-cell fusion during mating, and in spore release during sporulation. This enzyme may be involved in beta-glucan degradation and also function biosynthetically as a transglycosylase. This is Probable glucan endo-1,3-beta-glucosidase eglC (eglC) from Aspergillus fumigatus (strain ATCC MYA-4609 / CBS 101355 / FGSC A1100 / Af293) (Neosartorya fumigata).